Reading from the N-terminus, the 489-residue chain is Endothelial zinc finger protein induced by tumor necrosis factor alpha (489 aa).

A compositionally biased stretch (basic and acidic residues) spans 1-15 (MKELDPKNDISEDKL). Disordered regions lie at residues 1–61 (MKEL…PLGI) and 98–122 (EKGACPPVRRGKNFSSTSDLSKPPM). 13 consecutive C2H2-type zinc fingers follow at residues 130–152 (YDCSECGKAFSRSSSLIKHQRIH), 158–180 (FECDTCGKHFIERSSLTIHQRVH), 186–208 (YACGDCGKAFSQRMNLTVHQRTH), 214–236 (YVCDVCGKAFRKTSSLTQHERIH), 242–264 (YACGDCGKAFSQNMHLIVHQRTH), 270–292 (YVCPECGRAFSQNMHLTEHQRTH), 298–320 (YACKECGKAFNKSSSLTLHQRNH), 326–348 (YVCGECGKAFSQSSYLIQHQRFH), 354–376 (FECSECGKAFSKNSSLTQHQRIH), 382–404 (YECYICKKHFTGRSSLIVHQIVH), 410–432 (YVCGECGKAFSQSAYLIEHQRIH), 438–460 (YRCGQCGKSFIKNSSLTVHQRIH), and 466–488 (YRCGECGKTFSRNTNLTRHLRIH).

The protein belongs to the krueppel C2H2-type zinc-finger protein family. As to expression, highly expressed in placenta, followed by brain, testis, pancreas, heart, small intestine, muscle, uterus, prostate and peripheral blood leukocytes. Not detected in liver, lung, colon, stomach, salivary and thyroid gland.

It localises to the nucleus. Functionally, may be involved in transcriptional regulation. This Homo sapiens (Human) protein is Endothelial zinc finger protein induced by tumor necrosis factor alpha (ZNF71).